Reading from the N-terminus, the 160-residue chain is Twist-related protein 2 (160 aa).

Residues 1 to 63 form a disordered region; that stretch reads MEEGSSSPVS…GSPSAQSFEE (63 aa). Residues 27–37 are compositionally biased toward basic residues; sequence KRFGRKRRYSK. The bHLH domain occupies 66-117; it reads SQRILANVRERQRTQSLNEAFAALRKIIPTLPSDKLSKIQTLKLAARYIDFL.

In terms of assembly, efficient DNA binding requires dimerization with another bHLH protein. Forms a heterodimer with TCF3/E12. Also interacts with MEF2C. Expressed at low levels in sclerotome and dermatome of somites, and in limb buds at 10.5 dpc. Accumulates predominantly in dermatome, prevertebrae and derivatives of branchial arches by 13 dpc. Also expressed near surface of embryo and in chondrogenic cells. In adult, expressed at low levels in skin, bladder, uterus, aorta and heart.

Its subcellular location is the nucleus. It is found in the cytoplasm. Binds to the E-box consensus sequence 5'-CANNTG-3' as a heterodimer and inhibits transcriptional activation by MYOD1, MYOG, MEF2A and MEF2C. Also represses expression of pro-inflammatory cytokines such as TNFA and IL1B. Involved in postnatal glycogen storage and energy metabolism. Inhibits the premature or ectopic differentiation of preosteoblast cells during osteogenesis, possibly by changing the internal signal transduction response of osteoblasts to external growth factors. The protein is Twist-related protein 2 (Twist2) of Mus musculus (Mouse).